The chain runs to 123 residues: Fluoride-specific ion channel FluC (123 aa).

Transmembrane regions (helical) follow at residues 1-21 (MLEI…RYLM), 32-52 (ILSL…GLVI), 64-84 (IGLL…SFSY), and 99-119 (FGYT…GIYL). Residues Gly-74 and Thr-77 each contribute to the Na(+) site.

This sequence belongs to the fluoride channel Fluc/FEX (TC 1.A.43) family.

The protein localises to the cell inner membrane. The catalysed reaction is fluoride(in) = fluoride(out). With respect to regulation, na(+) is not transported, but it plays an essential structural role and its presence is essential for fluoride channel function. Functionally, fluoride-specific ion channel. Important for reducing fluoride concentration in the cell, thus reducing its toxicity. The polypeptide is Fluoride-specific ion channel FluC (Gloeothece citriformis (strain PCC 7424) (Cyanothece sp. (strain PCC 7424))).